The chain runs to 129 residues: Phosphoribosyl-AMP cyclohydrolase (129 aa).

Aspartate 78 is a binding site for Mg(2+). Cysteine 79 serves as a coordination point for Zn(2+). Aspartate 80 and aspartate 82 together coordinate Mg(2+). 2 residues coordinate Zn(2+): cysteine 96 and cysteine 103.

This sequence belongs to the PRA-CH family. As to quaternary structure, homodimer. The cofactor is Mg(2+). Requires Zn(2+) as cofactor.

It is found in the cytoplasm. It catalyses the reaction 1-(5-phospho-beta-D-ribosyl)-5'-AMP + H2O = 1-(5-phospho-beta-D-ribosyl)-5-[(5-phospho-beta-D-ribosylamino)methylideneamino]imidazole-4-carboxamide. The protein operates within amino-acid biosynthesis; L-histidine biosynthesis; L-histidine from 5-phospho-alpha-D-ribose 1-diphosphate: step 3/9. Catalyzes the hydrolysis of the adenine ring of phosphoribosyl-AMP. This Nitrosomonas eutropha (strain DSM 101675 / C91 / Nm57) protein is Phosphoribosyl-AMP cyclohydrolase.